The chain runs to 193 residues: dTTP/UTP pyrophosphatase (193 aa).

The Proton acceptor role is filled by aspartate 77.

It belongs to the Maf family. YhdE subfamily. The cofactor is a divalent metal cation.

The protein resides in the cytoplasm. The catalysed reaction is dTTP + H2O = dTMP + diphosphate + H(+). The enzyme catalyses UTP + H2O = UMP + diphosphate + H(+). Functionally, nucleoside triphosphate pyrophosphatase that hydrolyzes dTTP and UTP. May have a dual role in cell division arrest and in preventing the incorporation of modified nucleotides into cellular nucleic acids. This chain is dTTP/UTP pyrophosphatase, found in Phocaeicola vulgatus (strain ATCC 8482 / DSM 1447 / JCM 5826 / CCUG 4940 / NBRC 14291 / NCTC 11154) (Bacteroides vulgatus).